The chain runs to 613 residues: Serine protease FAM111A (613 aa).

The tract at residues 1–72 is disordered; that stretch reads MSCKKRKSQI…TRQDQTPPLN (72 aa). Residue Lys19 forms a Glycyl lysine isopeptide (Lys-Gly) (interchain with G-Cter in SUMO2) linkage. Ser25 is subject to Phosphoserine. A Glycyl lysine isopeptide (Lys-Gly) (interchain with G-Cter in SUMO2) cross-link involves residue Lys29. Residues 40–56 are compositionally biased toward basic and acidic residues; that stretch reads VDSKKMPRDITNTRDQR. Lys62 is covalently cross-linked (Glycyl lysine isopeptide (Lys-Gly) (interchain with G-Cter in SUMO2)). Catalysis depends on charge relay system residues His383, Asp437, and Ser543.

This sequence belongs to the FAM111 family. In terms of assembly, interacts (via PIP-box) with PCNA; this interaction is direct. Post-translationally, autocatalytically cleaved; autocatalytic cleavage takes place in trans.

The protein localises to the nucleus. Its subcellular location is the chromosome. The protein resides in the cytoplasm. Its function is as follows. Single-stranded DNA-binding serine protease that mediates the proteolytic cleavage of covalent DNA-protein cross-links (DPCs) during DNA synthesis, thereby playing a key role in maintaining genomic integrity. DPCs are highly toxic DNA lesions that interfere with essential chromatin transactions, such as replication and transcription, and which are induced by reactive agents, such as UV light or formaldehyde. Protects replication fork from stalling by removing DPCs, such as covalently trapped topoisomerase 1 (TOP1) adducts on DNA lesion, or poly(ADP-ribose) polymerase 1 (PARP1)-DNA complexes trapped by PARP inhibitors. Required for PCNA loading on replication sites. Promotes S-phase entry and DNA synthesis. In Mus musculus (Mouse), this protein is Serine protease FAM111A.